Reading from the N-terminus, the 271-residue chain is 5-deoxy-glucuronate isomerase (271 aa).

Belongs to the isomerase IolB family.

The catalysed reaction is 5-deoxy-D-glucuronate = 5-dehydro-2-deoxy-D-gluconate. It participates in polyol metabolism; myo-inositol degradation into acetyl-CoA; acetyl-CoA from myo-inositol: step 4/7. Involved in the isomerization of 5-deoxy-glucuronate (5DG) to 5-dehydro-2-deoxy-D-gluconate (DKG or 2-deoxy-5-keto-D-gluconate). This is 5-deoxy-glucuronate isomerase from Bacillus licheniformis (strain ATCC 14580 / DSM 13 / JCM 2505 / CCUG 7422 / NBRC 12200 / NCIMB 9375 / NCTC 10341 / NRRL NRS-1264 / Gibson 46).